We begin with the raw amino-acid sequence, 162 residues long: Small ribosomal subunit protein uS7m (162 aa).

Belongs to the universal ribosomal protein uS7 family. In terms of assembly, part of the small ribosomal subunit.

The protein resides in the mitochondrion. One of the primary rRNA binding proteins, it binds directly to 16S-like rRNA where it nucleates assembly of the head domain of the small subunit. In Dictyostelium citrinum (Slime mold), this protein is Small ribosomal subunit protein uS7m (mrps7).